Consider the following 688-residue polypeptide: PTS system glucoside-specific EIICBA component (688 aa).

A PTS EIIC type-1 domain is found at 3–427 (KKLFGQLQRI…FKLKTPGRED (425 aa)). 10 helical membrane passes run 12-32 (IGKALMLPVAILPAAGILLAF), 81-101 (LGLAGGDGVAALAALVGYLIM), 137-157 (LVLGIPTLQTGVFGGIIMGAL), 182-202 (FVPIVTSVVAIATGVLLSFAW), 223-243 (LTTFIFGIIERSLIPFGLHHI), 284-304 (AFTTGKYPFMMFGLPAAAFAI), 315-335 (VVGGLMLSAGLTAFLTGITEP), 340-360 (FLFVAPVLYGIHVLLAGTSFL), 364-384 (LLGVKIGMTFSGGFIDYILYG), and 395-415 (LVIPVGIVYAIVYYFLFDFAI). The 82-residue stretch at 438–519 (AKLPFDVLDA…AKIMSGEITK (82 aa)) folds into the PTS EIIB type-1 domain. Residue Cys-460 is the Phosphocysteine intermediate; for EIIB activity of the active site. A PTS EIIA type-1 domain is found at 560–664 (DQVFAGKMMG…SIVTPMIITN (105 aa)). The Tele-phosphohistidine intermediate; for EIIA activity role is filled by His-612.

Its subcellular location is the cell membrane. The phosphoenolpyruvate-dependent sugar phosphotransferase system (sugar PTS), a major carbohydrate active -transport system, catalyzes the phosphorylation of incoming sugar substrates concomitantly with their translocation across the cell membrane. This system is involved in alpha- and beta-glucoside transport. The chain is PTS system glucoside-specific EIICBA component (glcB) from Staphylococcus aureus (strain USA300).